The following is a 509-amino-acid chain: MGVLKFKHIFFRSFVKSSGVSQIVFTFLLIPCCLTLNFRAPPVIPNVPFLWAWNAPSEFCLGKFDEPLDMSLFSFIGSPRINATGQGVTIFYVDRLGYYPYIDSITGVTVNGGIPQKISLQDHLDKAKKDITFYMPVDNLGMAVIDWEEWRPTWARNWKPKDVYKNRSIELVQQQNVQLSLTEATEKAKQEFEKAGKDFLVETIKLGKLLRPNHLWGYYLFPDCYNHHYKKPGYNGSCFNVEIKRNDDLSWLWNESTALYPSIYLNTQQSPVAATLYVRNRVREAIRVSKIPDAKSPLPVFAYTRIVFTDQVLKFLSQDELVYTFGETVALGASGIVIWGTLSIMRSMKSCLLLDNYMETILNPYIINVTLAAKMCSQVLCQEQGVCIRKNWNSSDYLHLNPDNFAIQLEKGGKFTVRGKPTLEDLEQFSEKFYCSCYSTLSCKEKADVKDTDAVDVCIADGVCIDAFLKPPMETEEPQIFYNASPSTLSATMFIVSILFLIISSVASL.

A signal peptide spans 1–35 (MGVLKFKHIFFRSFVKSSGVSQIVFTFLLIPCCLT). Disulfide bonds link Cys60-Cys351 and Cys224-Cys238. Asn82 carries N-linked (GlcNAc...) asparagine glycosylation. The active-site Proton donor is the Glu148. Residues Asn166, Asn235, Asn254, and Asn368 are each glycosylated (N-linked (GlcNAc...) asparagine). Cystine bridges form between Cys376–Cys387, Cys381–Cys435, and Cys437–Cys464. Residue Asn393 is glycosylated (N-linked (GlcNAc...) asparagine). A lipid anchor (GPI-anchor amidated serine) is attached at Ser490. Positions 491–509 (ATMFIVSILFLIISSVASL) are cleaved as a propeptide — removed in mature form.

This sequence belongs to the glycosyl hydrolase 56 family. N-glycosylated. In terms of tissue distribution, testis.

The protein localises to the cell membrane. The enzyme catalyses Random hydrolysis of (1-&gt;4)-linkages between N-acetyl-beta-D-glucosamine and D-glucuronate residues in hyaluronate.. Its function is as follows. Involved in sperm-egg adhesion. Upon fertilization sperm must first penetrate a layer of cumulus cells that surrounds the egg before reaching the zona pellucida. The cumulus cells are embedded in a matrix containing hyaluronic acid which is formed prior to ovulation. This protein aids in penetrating the layer of cumulus cells by digesting hyaluronic acid. This is Hyaluronidase PH-20 (SPAM1) from Homo sapiens (Human).